Consider the following 440-residue polypeptide: Aspartokinase (440 aa).

Belongs to the aspartokinase family.

It carries out the reaction L-aspartate + ATP = 4-phospho-L-aspartate + ADP. Its pathway is amino-acid biosynthesis; L-lysine biosynthesis via DAP pathway; (S)-tetrahydrodipicolinate from L-aspartate: step 1/4. It participates in amino-acid biosynthesis; L-methionine biosynthesis via de novo pathway; L-homoserine from L-aspartate: step 1/3. It functions in the pathway amino-acid biosynthesis; L-threonine biosynthesis; L-threonine from L-aspartate: step 1/5. The sequence is that of Aspartokinase (lysC) from Chlamydia pneumoniae (Chlamydophila pneumoniae).